The sequence spans 1174 residues: Male determiner protein Mdmd(II) (1174 aa).

Residues 1–15 (MNATDAESRKPENKP) are compositionally biased toward basic and acidic residues. Disordered regions lie at residues 1-51 (MNAT…SGQR), 80-109 (KDGS…HPVE), and 136-259 (KQLS…LRRS). Residues 16-35 (SSESSSSGSTSGSSDGEVSS) are compositionally biased toward low complexity. Over residues 36 to 47 (KTYFKNNKSKVL) the composition is skewed to polar residues. Positions 80–92 (KDGSNEMLPKEDS) are enriched in basic and acidic residues. Positions 93 to 102 (INTNHNYTTD) are enriched in polar residues. Positions 138–153 (LSAYRSRSRSTRLSYS) are enriched in low complexity. A compositionally biased stretch (basic and acidic residues) spans 183-200 (HGRDSSTTKRSVSRDKDN). Positions 201–223 (RLRRRIGSSRSHTRSHSRFRRSE) are enriched in basic residues. Basic and acidic residues predominate over residues 235–259 (RSQERRHERRRSMSSDYERIALRRS). Residues 348–531 (KKYIHGYINK…KVLFQVRRDG (184 aa)) enclose the MIF4G domain. Low complexity predominate over residues 597-608 (DSDGSFGSGSNS). The disordered stretch occupies residues 597 to 616 (DSDGSFGSGSNSETALSDCD). Positions 641–757 (ALRRTIYLTL…SWDVLDCIKL (117 aa)) constitute an MI domain. Residues 840-857 (SAPSSSSSSSLSSELSAP) show a composition bias toward low complexity. Disordered regions lie at residues 840–1045 (SAPS…SRTK) and 1095–1133 (RKDN…NHSR). The segment covering 869–909 (KKKHKGKNKKMTKKKNPSKKKEKTKKIVGKNKIAAKNKTIK) has biased composition (basic residues). Basic and acidic residues predominate over residues 910–924 (RRTDKDNSSSKDNFL). Positions 926–957 (SESSSNESISLDSLSSELFAPSSYSSSESSND) are enriched in low complexity. Positions 963 to 1001 (KHKGKNKKMTKKKNPSNKREKTKKKLSKNKKAPNKNTKK) are enriched in basic residues. Residues 1010–1020 (SSESSISESKS) show a composition bias toward low complexity. Basic residues predominate over residues 1034–1045 (RKKRVTSKSRTK). Basic and acidic residues predominate over residues 1095-1118 (RKDNYGNRQNHEISQRHDSEIKRR). Over residues 1119-1130 (REERKKRHHEKN) the composition is skewed to basic residues.

It belongs to the CWC22 family. As to quaternary structure, component of the spliceosome C complex.

It is found in the nucleus speckle. Its function is as follows. Male determiner protein (M-factor) that controls male somatic sexual differentiation. Acts as a dominant factor that regulates the mRNA splicing of transformer (tra) and doublesex (dsx) transcripts and promotes expression of male splice forms of tra and dsx. Probably acts as a component of the spliceosome C complex required for mRNA splicing factor and exon-junction complex (EJC) assembly. Hinders eIF4AIII from non-specifically binding RNA and escorts it to the splicing machinery to promote EJC assembly on mature mRNAs. The polypeptide is Male determiner protein Mdmd(II) (Musca domestica (House fly)).